A 1496-amino-acid chain; its full sequence is DNA-directed RNA polymerase subunit beta' (1496 aa).

The Zn(2+) site is built by cysteine 67, cysteine 69, cysteine 82, and cysteine 85. Positions 499, 501, and 503 each coordinate Mg(2+). Zn(2+) is bound by residues cysteine 867, cysteine 943, cysteine 950, and cysteine 953.

This sequence belongs to the RNA polymerase beta' chain family. As to quaternary structure, the RNAP catalytic core consists of 2 alpha, 1 beta, 1 beta' and 1 omega subunit. When a sigma factor is associated with the core the holoenzyme is formed, which can initiate transcription. Mg(2+) is required as a cofactor. It depends on Zn(2+) as a cofactor.

It carries out the reaction RNA(n) + a ribonucleoside 5'-triphosphate = RNA(n+1) + diphosphate. Its function is as follows. DNA-dependent RNA polymerase catalyzes the transcription of DNA into RNA using the four ribonucleoside triphosphates as substrates. This chain is DNA-directed RNA polymerase subunit beta', found in Chlorobium limicola (strain DSM 245 / NBRC 103803 / 6330).